Here is an 800-residue protein sequence, read N- to C-terminus: Cell division cycle 5-like protein (800 aa).

HTH myb-type domains lie at 1–56 and 57–106; these read MRNV…DPSI and KKTE…DEVQ. 2 DNA-binding regions (H-T-H motif) span residues 29–52 and 80–102; these read WARI…HEWL and WKTI…NRLL. 4 disordered regions span residues 109–186, 334–378, 399–445, and 571–610; these read QDNE…KRKF, YEKL…NIRT, QTPL…KQSL, and NKTF…NDND. The span at 113–122 shows a compositional bias: gly residues; it reads NGGGSGGGGT. The segment covering 133–142 has biased composition (basic and acidic residues); it reads NDPRRLRMGD. Residues 340–351 show a composition bias toward gly residues; that stretch reads SGSGGGSGGVGV. A compositionally biased stretch (low complexity) spans 361 to 376; that stretch reads TASISSTAANNNTNNI. Composition is skewed to polar residues over residues 409 to 445 and 573 to 584; these read NVSQ…KQSL and TFPNDSITPSST. Residues 592–601 show a composition bias toward basic and acidic residues; it reads DNHHHHHDDI. Coiled-coil stretches lie at residues 621–700 and 748–800; these read NTEL…KIKN and VALK…LSIF.

Belongs to the CEF1 family. As to quaternary structure, component of the precatalytic, catalytic and postcatalytic spliceosome complexes.

The protein localises to the nucleus. The protein resides in the cytoplasm. DNA-binding protein involved in cell cycle control. May act as a transcription activator. Plays a role in pre-mRNA splicing as core component of precatalytic, catalytic and postcatalytic spliceosomal complexes. May also play a role in the response to DNA damage (DDR). The sequence is that of Cell division cycle 5-like protein (cdc5l) from Dictyostelium discoideum (Social amoeba).